Consider the following 128-residue polypeptide: Large ribosomal subunit protein bL17 (128 aa).

The protein belongs to the bacterial ribosomal protein bL17 family. In terms of assembly, part of the 50S ribosomal subunit. Contacts protein L32.

The protein is Large ribosomal subunit protein bL17 of Proteus mirabilis (strain HI4320).